We begin with the raw amino-acid sequence, 122 residues long: uncharacterized protein (122 aa).

Its subcellular location is the mitochondrion. This is an uncharacterized protein from Arabidopsis thaliana (Mouse-ear cress).